A 78-amino-acid chain; its full sequence is Defensin beta 136 (78 aa).

Positions 1–21 are cleaved as a signal peptide; it reads MNLCLSALLFFLVILLPSGKG. 3 disulfides stabilise this stretch: Cys-33–Cys-60, Cys-40–Cys-54, and Cys-44–Cys-61.

The protein belongs to the beta-defensin family.

The protein resides in the secreted. Its function is as follows. Host defense peptide that exhibits antibacterial and antifungal activity. Exhibits antimicrobial activity against E.coli, S.aureus and C.albicans (in vitro). Has high lipopolysaccharide (LPS)-binding affinity, and may thereby be involved in immunoregulation through LPS neutralization. The polypeptide is Defensin beta 136 (DEFB136) (Homo sapiens (Human)).